Consider the following 250-residue polypeptide: Enoyl-[acyl-carrier-protein] reductase [NADPH] FabL (250 aa).

Residues 13–16 (SRGV), 36–38 (ARS), 62–63 (NV), and Asn-89 contribute to the NADP(+) site. Active-site proton acceptor residues include Tyr-151 and Lys-158. Residues Lys-158 and 187–189 (IDT) each bind NADP(+).

It belongs to the short-chain dehydrogenases/reductases (SDR) family. In terms of assembly, homotetramer.

It catalyses the reaction a 2,3-saturated acyl-[ACP] + NADP(+) = a (2E)-enoyl-[ACP] + NADPH + H(+). It carries out the reaction (2E)-butenoyl-[ACP] + NADPH + H(+) = butanoyl-[ACP] + NADP(+). It participates in lipid metabolism; fatty acid biosynthesis. Its activity is regulated as follows. Inhibited by triclosan. Catalyzes the reduction of a carbon-carbon double bond in an enoyl moiety that is covalently linked to an acyl carrier protein (ACP). It confers resistance to triclosan. The sequence is that of Enoyl-[acyl-carrier-protein] reductase [NADPH] FabL (fabL) from Bacillus subtilis (strain 168).